We begin with the raw amino-acid sequence, 188 residues long: Peroxidase B (188 aa).

This sequence belongs to the peroxidase family. Partially N-glycosylated.

The protein resides in the secreted. It catalyses the reaction 2 a phenolic donor + H2O2 = 2 a phenolic radical donor + 2 H2O. This Aloe vera (Aloe) protein is Peroxidase B.